Reading from the N-terminus, the 457-residue chain is Putative transposase y4bF (457 aa).

An Integrase catalytic domain is found at 128–313; that stretch reads TFHQPRLRRE…RPLNLAPDRL (186 aa). The segment at 406–440 is disordered; that stretch reads QDERPAPKVRTNSEKNGYTPRGRKPGKRTDFMNDP.

The polypeptide is Putative transposase y4bF (Sinorhizobium fredii (strain NBRC 101917 / NGR234)).